The primary structure comprises 198 residues: Recombination protein RecR (198 aa).

The C4-type zinc-finger motif lies at 57–72; the sequence is CSVCGNLTDEDPCAIC. The 96-residue stretch at 80 to 175 folds into the Toprim domain; sequence STILIVEDSR…KVTRLARGLA (96 aa).

The protein belongs to the RecR family.

Its function is as follows. May play a role in DNA repair. It seems to be involved in an RecBC-independent recombinational process of DNA repair. It may act with RecF and RecO. The sequence is that of Recombination protein RecR from Streptococcus sanguinis (strain SK36).